Reading from the N-terminus, the 100-residue chain is NADH-quinone oxidoreductase subunit K (100 aa).

3 consecutive transmembrane segments (helical) span residues 2–22 (ISLNHYLLLCVILFCIGLFGI), 28–48 (ILMLFFSTEILLNAINIGFVA), and 63–83 (LFIIAIAASEIAVGLGLVVIW).

Belongs to the complex I subunit 4L family. In terms of assembly, NDH-1 is composed of 14 different subunits. Subunits NuoA, H, J, K, L, M, N constitute the membrane sector of the complex.

The protein resides in the cell inner membrane. The enzyme catalyses a quinone + NADH + 5 H(+)(in) = a quinol + NAD(+) + 4 H(+)(out). In terms of biological role, NDH-1 shuttles electrons from NADH, via FMN and iron-sulfur (Fe-S) centers, to quinones in the respiratory chain. The immediate electron acceptor for the enzyme in this species is believed to be ubiquinone. Couples the redox reaction to proton translocation (for every two electrons transferred, four hydrogen ions are translocated across the cytoplasmic membrane), and thus conserves the redox energy in a proton gradient. The sequence is that of NADH-quinone oxidoreductase subunit K from Helicobacter hepaticus (strain ATCC 51449 / 3B1).